Consider the following 593-residue polypeptide: NADH-quinone oxidoreductase subunit C/D (593 aa).

Residues 1–184 are NADH dehydrogenase I subunit C; that stretch reads MTADNALYIP…DPYSLTLAKQ (184 aa). Residues 208–593 form an NADH dehydrogenase I subunit D region; the sequence is DYMFLNLGPN…IDFVMADVDR (386 aa).

This sequence in the N-terminal section; belongs to the complex I 30 kDa subunit family. The protein in the C-terminal section; belongs to the complex I 49 kDa subunit family. NDH-1 is composed of 13 different subunits. Subunits NuoB, CD, E, F, and G constitute the peripheral sector of the complex.

Its subcellular location is the cell inner membrane. It carries out the reaction a quinone + NADH + 5 H(+)(in) = a quinol + NAD(+) + 4 H(+)(out). NDH-1 shuttles electrons from NADH, via FMN and iron-sulfur (Fe-S) centers, to quinones in the respiratory chain. The immediate electron acceptor for the enzyme in this species is believed to be ubiquinone. Couples the redox reaction to proton translocation (for every two electrons transferred, four hydrogen ions are translocated across the cytoplasmic membrane), and thus conserves the redox energy in a proton gradient. In Pseudomonas savastanoi pv. phaseolicola (strain 1448A / Race 6) (Pseudomonas syringae pv. phaseolicola (strain 1448A / Race 6)), this protein is NADH-quinone oxidoreductase subunit C/D.